The sequence spans 767 residues: Cadherin-5 (767 aa).

An N-terminal signal peptide occupies residues 1 to 29 (MMKQCARRQMTEPVFRVAVLLALCSLSIG). Positions 30 to 51 (VDVHQAQKTPSISSAALQRHKR) are excised as a propeptide. Over 30 to 593 (VDVHQAQKTP…SYARTGMSVS (564 aa)) the chain is Extracellular. Positions 62, 63, 113, and 115 each coordinate Ca(2+). 5 consecutive Cadherin domains span residues 86-155 (RYIL…IPVF), 155-261 (FDSD…IATF), 262-373 (KKER…PPIF), 374-475 (NQTE…APEL), and 475-581 (LTNG…RVEY). N-linked (GlcNAc...) asparagine glycosylation occurs at N121. 7 residues coordinate Ca(2+): D147, I148, N149, D150, N151, D180, and D182. N197 is a glycosylation site (N-linked (GlcNAc...) asparagine). D233 serves as a coordination point for Ca(2+). N-linked (GlcNAc...) asparagine glycans are attached at residues N374, N477, and N518. A helical membrane pass occupies residues 594–614 (ALLAILLCIITILVIVILIVL). Over 615 to 767 (RRRYQKEVLV…VDGSDSDSSY (153 aa)) the chain is Cytoplasmic.

Its subcellular location is the cell membrane. It is found in the cell junction. It localises to the adherens junction. Functionally, cadherins are calcium-dependent cell adhesion proteins. They preferentially interact with themselves in a homophilic manner in connecting cells; cadherins may thus contribute to the sorting of heterogeneous cell types. Required for embryonic cardiac looping and heart chamber development, via promotion of cell-cell junction formation and subsequent attachment between the endothelial and myocardial layers of the heart. Required for the directional migration and delamination of endothelial cell monolayers, by which common cardinal veins form via the lumen ensheathment mechanism of vessel development as they migrate and connect with the heart inflow tract. Required for the formation of filopodia extensions (sprouts) at the initiation of intersegmental vessel development, by acting (via its C-terminus) to facilitate anchoring of the actin cytoskeleton to cell junctions in endothelial cells. Then positively regulates dorsal migration of stalk cells and sprout outgrowth towards the dorsal longitudinal anastomotic vessels (DLAV) via endothelial cell elongation. Following contact with the DLAV, required for intersegmental vessel lumen formation, potentially via facilitating the formation and/or extension of endothelial cell tight junctions that are required during tubulogenesis. The chain is Cadherin-5 from Danio rerio (Zebrafish).